Here is an 807-residue protein sequence, read N- to C-terminus: 85/88 kDa calcium-independent phospholipase A2 (807 aa).

At Ser13 the chain carries Phosphoserine. ANK repeat units lie at residues 120-147 (WTVTHLAVELGIRECFHHSRIISCANST), 151-181 (EGCTPLHLACRKGDSEILVELVQYCHAQMDV), 185-215 (KGETAFHYAVQGDNPQVLQLLGKNASAGLNQ), 219-248 (QGLTPLHLACQMGKQEMVRVLLLCNARCNI), 251-281 (PGGFPIHTAMKFSQKGCAEMIISMDSNQIHS), 286-312 (YGASPLHWAKNAEMARMLLKRGCDVDS), 316-345 (SGNTALHVAVTRNRFDCVMVLLTYGANAGA), 349-378 (HGNTPLHLAMSKDNMEMVKALIVFGAEVDT), and 382-403 (FGETPAFIASKISKLITRKALL). The next 2 helical transmembrane spans lie at 481-501 (LLCLDGGGVKGLVIIQLLIAI) and 512-532 (LFDWVAGTSTGGILALAILHS). Positions 482-666 (LCLDGGGVKG…LANNPTLDAM (185 aa)) constitute a PNPLA domain. The short motif at 486–491 (GGGVKG) is the GXGXXG element. The GXSXG signature appears at 518 to 522 (GTSTG). The active-site Nucleophile is Ser520. The active-site Proton acceptor is Asp653. Residues 653 to 655 (DGG) carry the DGA/G motif. The interval 678-687 (RKGQGNKVKK) is calmodulin-binding (1-9-14 motif). The segment at 749–760 (AWCEMVGIQYFR) is calmodulin-binding (IQ motif).

Homodimer formed by catalytic domains tightly interacting through a large hydrophobic interface. The contact area involves 3 alpha helices, several loops and a part of the beta sheet from each monomer. Both active sites of the dimer are in close proximity adopting an open conformation that provide sufficient space for phospholipid access and favoring cooperativity in deacylation-reacylation reactions. Each monomer has 9 ankyrin repeats stacked side-by-side in an elongated structure oriented outwards from the catalytic core. In terms of tissue distribution, expressed in pancreatic beta-cells. Expressed in skeletal muscle (at protein level).

The protein resides in the cytoplasm. The protein localises to the cell membrane. It localises to the mitochondrion. It is found in the cell projection. Its subcellular location is the pseudopodium. It catalyses the reaction a 1,2-diacyl-sn-glycero-3-phosphocholine + H2O = a 1-acyl-sn-glycero-3-phosphocholine + a fatty acid + H(+). It carries out the reaction a 1-O-alkyl-2-acyl-sn-glycero-3-phosphocholine + H2O = a 1-O-alkyl-sn-glycero-3-phosphocholine + a fatty acid + H(+). The enzyme catalyses 1,2-dihexadecanoyl-sn-glycero-3-phosphocholine + H2O = 1-hexadecanoyl-sn-glycero-3-phosphocholine + hexadecanoate + H(+). The catalysed reaction is 1-hexadecanoyl-2-(9Z-octadecenoyl)-sn-glycero-3-phosphocholine + H2O = 1-hexadecanoyl-sn-glycero-3-phosphocholine + (9Z)-octadecenoate + H(+). It catalyses the reaction 1-hexadecanoyl-2-(9Z,12Z-octadecadienoyl)-sn-glycero-3-phosphocholine + H2O = (9Z,12Z)-octadecadienoate + 1-hexadecanoyl-sn-glycero-3-phosphocholine + H(+). It carries out the reaction 1-hexadecanoyl-2-(5Z,8Z,11Z,14Z-eicosatetraenoyl)-sn-glycero-3-phosphocholine + H2O = 1-hexadecanoyl-sn-glycero-3-phosphocholine + (5Z,8Z,11Z,14Z)-eicosatetraenoate + H(+). The enzyme catalyses 1-octadecanoyl-2-(5Z,8Z,11Z,14Z-eicosatetraenoyl)-sn-glycero-3-phosphocholine + H2O = 1-octadecanoyl-sn-glycero-3-phosphocholine + (5Z,8Z,11Z,14Z)-eicosatetraenoate + H(+). The catalysed reaction is 1-hexadecanoyl-2-(5Z,8Z,11Z,14Z-eicosatetraenoyl)-sn-glycero-3-phosphoethanolamine + H2O = 1-hexadecanoyl-sn-glycero-3-phosphoethanolamine + (5Z,8Z,11Z,14Z)-eicosatetraenoate + H(+). It catalyses the reaction 1,2-dihexadecanoyl-sn-glycero-3-phosphate + H2O = 1-hexadecanoyl-sn-glycero-3-phosphate + hexadecanoate + H(+). It carries out the reaction a 1-acyl-sn-glycero-3-phosphocholine + H2O = sn-glycerol 3-phosphocholine + a fatty acid + H(+). The enzyme catalyses 1-hexadecanoyl-sn-glycero-3-phosphocholine + H2O = sn-glycerol 3-phosphocholine + hexadecanoate + H(+). The catalysed reaction is 1-(5Z,8Z,11Z,14Z-eicosatetraenoyl)-sn-glycero-3-phosphocholine + H2O = sn-glycerol 3-phosphocholine + (5Z,8Z,11Z,14Z)-eicosatetraenoate + H(+). It catalyses the reaction 2-(5Z,8Z,11Z,14Z)-eicosatetraenoyl-sn-glycero-3-phosphocholine + H2O = sn-glycerol 3-phosphocholine + (5Z,8Z,11Z,14Z)-eicosatetraenoate + H(+). It carries out the reaction 1-O-hexadecyl-2-(5Z,8Z,11Z,14Z)-eicosatetraenoyl-sn-glycero-3-phosphocholine + H2O = 1-O-hexadecyl-sn-glycero-3-phosphocholine + (5Z,8Z,11Z,14Z)-eicosatetraenoate + H(+). The enzyme catalyses 1-O-hexadecyl-2-acetyl-sn-glycero-3-phosphocholine + H2O = 1-O-hexadecyl-sn-glycero-3-phosphocholine + acetate + H(+). The catalysed reaction is hexadecanoyl-CoA + H2O = hexadecanoate + CoA + H(+). It catalyses the reaction 1',3'-bis[1,2-di-(9Z-octadecenoyl)-sn-glycero-3-phospho]-glycerol + H2O = 1'-[1,2-di-(9Z-octadecenoyl)-sn-glycero-3-phospho]-3'-[1-(9Z-octadecenoyl)-sn-glycero-3-phospho]-glycerol + (9Z)-octadecenoate + H(+). It carries out the reaction 1'-[1,2-di-(9Z-octadecenoyl)-sn-glycero-3-phospho]-3'-[1-(9Z-octadecenoyl)-sn-glycero-3-phospho]-glycerol + H2O = 1',3'-bis-[1-(9Z-octadecenoyl)-sn-glycero-3-phospho]-glycerol + (9Z)-octadecenoate + H(+). The enzyme catalyses 1',3'-bis-[1,2-di-(9Z,12Z-octadecadienoyl)-sn-glycero-3-phospho]-glycerol + H2O = 1'-[1,2-di-(9Z,12Z-octadecadienoyl)-sn-glycero-3-phospho]-3'-[1-(9Z,12Z-octadecadienoyl)-sn-glycero-3-phospho]-glycerol + (9Z,12Z)-octadecadienoate + H(+). The catalysed reaction is 1-octadecanoyl-2-(15-hydroxy-(5Z,8Z,11Z,13E)-eicosatetraenoyl)-sn-glycero-3-phosphoethanolamine + H2O = 1-octadecanoyl-sn-glycero-3-phosphoethanolamine + 15-hydroxy-(5Z,8Z,11Z,13E)-eicosatetraenoate + H(+). Activated by ATP. Inhibited by calcium-activated calmodulin. Inhibited by bromoenol lactone (BEL). Functionally, calcium-independent phospholipase involved in phospholipid remodeling with implications in cellular membrane homeostasis, mitochondrial integrity and signal transduction. Hydrolyzes the ester bond of the fatty acyl group attached at sn-1 or sn-2 position of phospholipids (phospholipase A1 and A2 activity respectively), producing lysophospholipids that are used in deacylation-reacylation cycles. Hydrolyzes both saturated and unsaturated long fatty acyl chains in various glycerophospholipid classes such as phosphatidylcholines, phosphatidylethanolamines and phosphatidates, with a preference for hydrolysis at sn-2 position. Can further hydrolyze lysophospholipids carrying saturated fatty acyl chains (lysophospholipase activity). Upon oxidative stress, contributes to remodeling of mitochondrial phospholipids in pancreatic beta cells, in a repair mechanism to reduce oxidized lipid content. Preferentially hydrolyzes oxidized polyunsaturated fatty acyl chains from cardiolipins, yielding monolysocardiolipins that can be reacylated with unoxidized fatty acyls to regenerate native cardiolipin species. Hydrolyzes oxidized glycerophosphoethanolamines present in pancreatic islets, releasing oxidized polyunsaturated fatty acids such as hydroxyeicosatetraenoates (HETEs). Has thioesterase activity toward fatty-acyl CoA releasing CoA-SH known to facilitate fatty acid transport and beta-oxidation in mitochondria particularly in skeletal muscle. Plays a role in regulation of membrane dynamics and homeostasis. Selectively hydrolyzes sn-2 arachidonoyl group in plasmalogen phospholipids, structural components of lipid rafts and myelin. Regulates F-actin polymerization at the pseudopods, which is required for both speed and directionality of MCP1/CCL2-induced monocyte chemotaxis. Targets membrane phospholipids to produce potent lipid signaling messengers. Generates lysophosphatidate (LPA, 1-acyl-glycerol-3-phosphate), which acts via G-protein receptors in various cell types. Has phospholipase A2 activity toward platelet-activating factor (PAF, 1-O-alkyl-2-acetyl-sn-glycero-3-phosphocholine), likely playing a role in inactivation of this potent pro-inflammatory signaling lipid. In response to glucose, amplifies calcium influx in pancreatic beta cells to promote INS secretion. The polypeptide is 85/88 kDa calcium-independent phospholipase A2 (Pla2g6) (Rattus norvegicus (Rat)).